We begin with the raw amino-acid sequence, 566 residues long: Proline--tRNA ligase (566 aa).

This sequence belongs to the class-II aminoacyl-tRNA synthetase family. ProS type 1 subfamily. Homodimer.

It is found in the cytoplasm. It carries out the reaction tRNA(Pro) + L-proline + ATP = L-prolyl-tRNA(Pro) + AMP + diphosphate. Catalyzes the attachment of proline to tRNA(Pro) in a two-step reaction: proline is first activated by ATP to form Pro-AMP and then transferred to the acceptor end of tRNA(Pro). As ProRS can inadvertently accommodate and process non-cognate amino acids such as alanine and cysteine, to avoid such errors it has two additional distinct editing activities against alanine. One activity is designated as 'pretransfer' editing and involves the tRNA(Pro)-independent hydrolysis of activated Ala-AMP. The other activity is designated 'posttransfer' editing and involves deacylation of mischarged Ala-tRNA(Pro). The misacylated Cys-tRNA(Pro) is not edited by ProRS. This chain is Proline--tRNA ligase, found in Campylobacter concisus (strain 13826).